We begin with the raw amino-acid sequence, 125 residues long: Snaclec alboaggregin-A subunit beta (125 aa).

The C-type lectin domain occupies 1 to 125 (GFDCPFGWSS…TRYPVCKFXG (125 aa)). 3 cysteine pairs are disulfide-bonded: Cys-4–Cys-15, Cys-32–Cys-121, and Cys-98–Cys-113.

The protein belongs to the snaclec family. In terms of assembly, heterotetramer of the subunits alpha, alpha', beta and beta'; disulfide-linked. In terms of tissue distribution, expressed by the venom gland.

The protein localises to the secreted. Its function is as follows. Potent platelet activator that aggregates platelets via both GPIbalpha (GP1BA) and GPVI (GP6). Induces a tyrosine phosphorylation profile in platelets that resembles this produced by collagen, involving the time dependent tyrosine phosphorylation of Fc receptor gamma chain (FCGR1A), phospholipase Cgamma2 (PLCG2), and LAT. This Trimeresurus albolabris (White-lipped pit viper) protein is Snaclec alboaggregin-A subunit beta.